A 447-amino-acid polypeptide reads, in one-letter code: Voltage-gated purine nucleotide uniporter SLC17A9 (447 aa).

Residues 1–26 (MPSQRSSLMQPIPEETRKTPSAAAED) are disordered. A run of 11 helical transmembrane segments spans residues 40–60 (ILLLGTCLLYCARVTMPVCTV), 74–94 (GIVLSSFFWGYCLTQVVGGHL), 103–123 (VILLSASAWGFITVTTPLLAH), 129–149 (LAFLTFSRILTGLLQGVYFPA), 169–189 (TVGAGSQVGTLVTGGVGSVLL), 192–212 (CGWQSVFYFSGGLTLLWAYYV), 252–272 (VWAAICSQLCSACSFFILLSW), 287–307 (WVFNVVPWMLAIPASLFSGFI), 327–347 (VMGLGLSSIFALCLGHTTSFL), 380–400 (GFLFGVANTAGALAGVVGVCL), and 413–433 (CVFHLVAIISNLGLGTFLVFG).

This sequence belongs to the major facilitator superfamily. Sodium/anion cotransporter family. As to expression, in brain, specifically expressed in the medulla and is associated with chromaffin granules (at protein level). Predominantly expressed in adrenal gland, brain and thyroid.

It is found in the cytoplasmic vesicle. It localises to the secretory vesicle. Its subcellular location is the chromaffin granule membrane. The protein localises to the secretory vesicle membrane. The protein resides in the lysosome membrane. The catalysed reaction is ATP(in) = ATP(out). It carries out the reaction ADP(in) = ADP(out). It catalyses the reaction GTP(in) = GTP(out). Activity is chloride-dependent. Its function is as follows. Voltage-gated ATP nucleotide uniporter that can also transport the purine nucleotides ADP and GTP. Uses the membrane potential as the driving force to control ATP accumulation in lysosomes and secretory vesicles. By controlling ATP storage in lysosomes, regulates ATP-dependent proteins of these organelles. Also indirectly regulates the exocytosis of ATP through its import into lysosomes in astrocytes and secretory vesicles such as adrenal chromaffin granules, mucin granules and synaptic vesicles. The sequence is that of Voltage-gated purine nucleotide uniporter SLC17A9 from Mus musculus (Mouse).